Here is a 394-residue protein sequence, read N- to C-terminus: Elongation factor Tu 1 (394 aa).

Positions Lys10–Glu204 constitute a tr-type G domain. A G1 region spans residues Gly19–Thr26. Gly19 to Thr26 is a GTP binding site. Mg(2+) is bound at residue Thr26. The tract at residues Gly60–Ser64 is G2. The G3 stretch occupies residues Asp81–Gly84. GTP-binding positions include Asp81 to His85 and Asn136 to Asp139. Residues Asn136–Asp139 form a G4 region. The segment at Ser174 to Leu176 is G5.

The protein belongs to the TRAFAC class translation factor GTPase superfamily. Classic translation factor GTPase family. EF-Tu/EF-1A subfamily. In terms of assembly, monomer.

Its subcellular location is the cytoplasm. The catalysed reaction is GTP + H2O = GDP + phosphate + H(+). Functionally, GTP hydrolase that promotes the GTP-dependent binding of aminoacyl-tRNA to the A-site of ribosomes during protein biosynthesis. This is Elongation factor Tu 1 from Photorhabdus laumondii subsp. laumondii (strain DSM 15139 / CIP 105565 / TT01) (Photorhabdus luminescens subsp. laumondii).